A 147-amino-acid chain; its full sequence is Acidic phospholipase A2 beta-bungarotoxin A4 chain (147 aa).

The first 19 residues, 1–19 (MNPAHLLVLSAVCVSLLGA), serve as a signal peptide directing secretion. Positions 20–27 (ANIPPQHL) are excised as a propeptide. Cystine bridges form between Cys-54-Cys-146, Cys-56-Cys-72, Cys-71-Cys-127, Cys-78-Cys-120, Cys-88-Cys-113, and Cys-106-Cys-118. Ca(2+) is bound by residues Tyr-55, Gly-57, and Gly-59. Residue His-75 is part of the active site. Residue Asp-76 participates in Ca(2+) binding. Asp-121 is a catalytic residue.

This sequence belongs to the phospholipase A2 family. Group I subfamily. D49 sub-subfamily. Heterodimer; disulfide-linked. The A chains have phospholipase A2 activity and the B chains show homology with the basic protease inhibitors. It depends on Ca(2+) as a cofactor. Expressed by the venom gland.

It localises to the secreted. It catalyses the reaction a 1,2-diacyl-sn-glycero-3-phosphocholine + H2O = a 1-acyl-sn-glycero-3-phosphocholine + a fatty acid + H(+). Functionally, snake venom phospholipase A2 (PLA2) that inhibits neuromuscular transmission by blocking acetylcholine release from the nerve termini. PLA2 catalyzes the calcium-dependent hydrolysis of the 2-acyl groups in 3-sn-phosphoglycerides. In Bungarus multicinctus (Many-banded krait), this protein is Acidic phospholipase A2 beta-bungarotoxin A4 chain.